A 312-amino-acid chain; its full sequence is Olfactory receptor 4K17 (312 aa).

Residues 1 to 25 (MKLLNQSQVSEFILLGLTSSQDVEF) lie on the Extracellular side of the membrane. An N-linked (GlcNAc...) asparagine glycan is attached at asparagine 5. Residues 26 to 49 (LLFALFSVIYVVTVLGNLLIIVTV) traverse the membrane as a helical segment. The Cytoplasmic portion of the chain corresponds to 50 to 57 (FNTPNLNT). The chain crosses the membrane as a helical span at residues 58 to 79 (PMYFLLGNLSFVDMTLASFATP). Residues 80–100 (KVILNLLKKQKVISFAGCFTQ) are Extracellular-facing. Residues cysteine 97 and cysteine 189 are joined by a disulfide bond. The chain crosses the membrane as a helical span at residues 101–120 (IFLLHLLGGVEMVLLVSMAF). The Cytoplasmic portion of the chain corresponds to 121 to 139 (DRYVAICKPLHYMTIMNKK). Residues 140 to 158 (VCVLLVVTSWLLGLLHSGF) form a helical membrane-spanning segment. The Extracellular segment spans residues 159–195 (QIPFAVNLPFCGPNVVDSIFCDLPLVTKLACIDIYFV). A helical transmembrane segment spans residues 196 to 219 (QVVIVANSGIISLSCFIILLISYS). Residues 220–235 (LILITIKNHSPTGQSK) lie on the Cytoplasmic side of the membrane. Residues 236–258 (ARSTLTAHITVVILFFGPCIFIY) traverse the membrane as a helical segment. Residues 259–269 (IWPFGNHSVDK) lie on the Extracellular side of the membrane. An N-linked (GlcNAc...) asparagine glycan is attached at asparagine 264. The helical transmembrane segment at 270-289 (FLAVFYTIITPILNPIIYTL) threads the bilayer. Residues 290 to 312 (RNKEMKISMKKLWRAFVNSREDT) are Cytoplasmic-facing.

This sequence belongs to the G-protein coupled receptor 1 family.

The protein localises to the cell membrane. Functionally, odorant receptor. This chain is Olfactory receptor 4K17 (OR4K17), found in Homo sapiens (Human).